The following is a 41-amino-acid chain: Submaxillary gland androgen-regulated protein 2, isoform beta (41 aa).

The signal sequence occupies residues 1-22 (MKALYMVFVLWVLIGCFLRLLK).

It is found in the secreted. In terms of biological role, may play a role in protection or detoxification. In Mus musculus (Mouse), this protein is Submaxillary gland androgen-regulated protein 2, isoform beta (Smr2).